The following is a 348-amino-acid chain: D-alanine--D-alanine ligase (348 aa).

One can recognise an ATP-grasp domain in the interval 132 to 334; sequence KQVLATVGVP…YSDLIEKLVM (203 aa). Residue 162–217 participates in ATP binding; it reads LETLSFPIFVKPANMGSSVGISKATDESSLRSAIDLALKYDSRILIEQGVTAREIE. Mg(2+)-binding residues include Asp288, Glu301, and Asn303.

This sequence belongs to the D-alanine--D-alanine ligase family. The cofactor is Mg(2+). Mn(2+) serves as cofactor.

It localises to the cytoplasm. The enzyme catalyses 2 D-alanine + ATP = D-alanyl-D-alanine + ADP + phosphate + H(+). The protein operates within cell wall biogenesis; peptidoglycan biosynthesis. Its function is as follows. Cell wall formation. The sequence is that of D-alanine--D-alanine ligase from Streptococcus agalactiae serotype Ia (strain ATCC 27591 / A909 / CDC SS700).